The primary structure comprises 313 residues: Methionyl-tRNA formyltransferase (313 aa).

111 to 114 (SLLP) contacts (6S)-5,6,7,8-tetrahydrofolate.

It belongs to the Fmt family.

It carries out the reaction L-methionyl-tRNA(fMet) + (6R)-10-formyltetrahydrofolate = N-formyl-L-methionyl-tRNA(fMet) + (6S)-5,6,7,8-tetrahydrofolate + H(+). Attaches a formyl group to the free amino group of methionyl-tRNA(fMet). The formyl group appears to play a dual role in the initiator identity of N-formylmethionyl-tRNA by promoting its recognition by IF2 and preventing the misappropriation of this tRNA by the elongation apparatus. This Mesoplasma florum (strain ATCC 33453 / NBRC 100688 / NCTC 11704 / L1) (Acholeplasma florum) protein is Methionyl-tRNA formyltransferase.